We begin with the raw amino-acid sequence, 183 residues long: Triggering receptor expressed on myeloid cells 3 (183 aa).

Residues 1–19 (MSPLLLWLGLMLCVSGLQA) form the signal peptide. At 20-138 (GDEEEHKCFL…AWCQGKPVMV (119 aa)) the chain is on the extracellular side. The 99-residue stretch at 30–128 (EGENLTLTCP…VIILRQRIRL (99 aa)) folds into the Ig-like V-type domain. Asn-33 is a glycosylation site (N-linked (GlcNAc...) asparagine). Cys-38 and Cys-110 are disulfide-bonded. A helical transmembrane segment spans residues 139–159 (IVLTCGFILNKGLVFSVLFVF). Residues 160–183 (LCKAGPKVLQPSKTSKVQGVSEKQ) lie on the Cytoplasmic side of the membrane.

In terms of assembly, interacts with TYROBP/DAP12. Expressed in macrophages and in T-cells.

Its subcellular location is the cell membrane. Forms a receptor signaling complex with TYROBP/DAP12 which mediates activation of macrophages as part of the innate immune response. This is Triggering receptor expressed on myeloid cells 3 from Mus musculus (Mouse).